Consider the following 415-residue polypeptide: Zona pellucida-like domain-containing protein 1 (415 aa).

The first 19 residues, 1-19, serve as a signal peptide directing secretion; sequence MEQIRLLLLLTIRVLSGSA. Topologically, residues 20 to 372 are extracellular; it reads QFNGYNCDAN…PPFQLNAITS (353 aa). In terms of domain architecture, ZP spans 43 to 320; it reads YCGVQAITMK…PICSHRERRD (278 aa). Cystine bridges form between cysteine 44–cysteine 155 and cysteine 79–cysteine 104. N-linked (GlcNAc...) asparagine glycosylation occurs at asparagine 164. Intrachain disulfides connect cysteine 235-cysteine 296 and cysteine 255-cysteine 313. Positions 323 to 359 are disordered; sequence RRTTWSSQSSSGSAVLSAGPIITRSDETPTNNSQLGS. Over residues 328–339 the composition is skewed to low complexity; the sequence is SSQSSSGSAVLS. The span at 350 to 359 shows a compositional bias: polar residues; that stretch reads TPTNNSQLGS. A helical transmembrane segment spans residues 373–393; the sequence is ALISGMVILGVMSFSLLVCPL. Topologically, residues 394-415 are cytoplasmic; sequence ALLHRKGPTSLVLNGIRNPVFD.

In terms of processing, proteolytically cleaved before the transmembrane segment to yield the secreted form found in the extracellular matrix of the cupula.

It localises to the cytoplasmic vesicle membrane. The protein localises to the secreted. It is found in the extracellular space. Its subcellular location is the extracellular matrix. Functionally, glycoprotein which is a component of the gelatinous extracellular matrix in the cupulae of the vestibular organ. In Macaca fascicularis (Crab-eating macaque), this protein is Zona pellucida-like domain-containing protein 1 (ZPLD1).